A 114-amino-acid chain; its full sequence is Large ribosomal subunit protein uL18 (114 aa).

The protein belongs to the universal ribosomal protein uL18 family. In terms of assembly, part of the 50S ribosomal subunit; part of the 5S rRNA/L5/L18/L25 subcomplex. Contacts the 5S and 23S rRNAs.

Its function is as follows. This is one of the proteins that bind and probably mediate the attachment of the 5S RNA into the large ribosomal subunit, where it forms part of the central protuberance. The sequence is that of Large ribosomal subunit protein uL18 from Bacteroides fragilis (strain ATCC 25285 / DSM 2151 / CCUG 4856 / JCM 11019 / LMG 10263 / NCTC 9343 / Onslow / VPI 2553 / EN-2).